Reading from the N-terminus, the 296-residue chain is 33 kDa chaperonin (296 aa).

2 cysteine pairs are disulfide-bonded: C238/C240 and C271/C274.

This sequence belongs to the HSP33 family. Post-translationally, under oxidizing conditions two disulfide bonds are formed involving the reactive cysteines. Under reducing conditions zinc is bound to the reactive cysteines and the protein is inactive.

The protein resides in the cytoplasm. Its function is as follows. Redox regulated molecular chaperone. Protects both thermally unfolding and oxidatively damaged proteins from irreversible aggregation. Plays an important role in the bacterial defense system toward oxidative stress. This is 33 kDa chaperonin from Clostridium botulinum (strain Loch Maree / Type A3).